A 225-amino-acid chain; its full sequence is Ribulose-phosphate 3-epimerase (225 aa).

Substrate is bound at residue S10. A divalent metal cation-binding residues include H35, D37, and H68. Residue D37 is the Proton acceptor of the active site. Residues H68, 144–147 (GFGG), and 175–177 (DGG) each bind substrate. D175 is an a divalent metal cation binding site. The active-site Proton donor is D175.

It belongs to the ribulose-phosphate 3-epimerase family. A divalent metal cation serves as cofactor.

It catalyses the reaction D-ribulose 5-phosphate = D-xylulose 5-phosphate. The protein operates within carbohydrate degradation. Functionally, catalyzes the reversible epimerization of D-ribulose 5-phosphate to D-xylulose 5-phosphate. The chain is Ribulose-phosphate 3-epimerase from Rhodospirillum rubrum.